The primary structure comprises 131 residues: Small ribosomal subunit protein uS8 (131 aa).

Belongs to the universal ribosomal protein uS8 family. As to quaternary structure, part of the 30S ribosomal subunit. Contacts proteins S5 and S12.

In terms of biological role, one of the primary rRNA binding proteins, it binds directly to 16S rRNA central domain where it helps coordinate assembly of the platform of the 30S subunit. The protein is Small ribosomal subunit protein uS8 of Delftia acidovorans (strain DSM 14801 / SPH-1).